The primary structure comprises 138 residues: Putative pre-16S rRNA nuclease (138 aa).

This sequence belongs to the YqgF nuclease family.

The protein localises to the cytoplasm. Functionally, could be a nuclease involved in processing of the 5'-end of pre-16S rRNA. The protein is Putative pre-16S rRNA nuclease of Geobacillus kaustophilus (strain HTA426).